A 522-amino-acid chain; its full sequence is Endochitinase 11 (522 aa).

The first 24 residues, 1 to 24 (MLFSMVMFTERWWVGSKDCPRVPA), serve as a signal peptide directing secretion. N-linked (GlcNAc...) asparagine glycans are attached at residues Asn148 and Asn275. A GH18 domain is found at 235-522 (KHVYAPYVDF…ALTCLRNSTA (288 aa)). The active-site Proton donor is Glu346. Residues Asn455 and Asn519 are each glycosylated (N-linked (GlcNAc...) asparagine).

It belongs to the glycosyl hydrolase 18 family. Chitinase class V subfamily.

Its subcellular location is the secreted. The enzyme catalyses Random endo-hydrolysis of N-acetyl-beta-D-glucosaminide (1-&gt;4)-beta-linkages in chitin and chitodextrins.. In terms of biological role, secreted chitinase involved in the degradation of chitin, a component of the cell walls of fungi and exoskeletal elements of some animals (including worms and arthropods). Participates in the infection process and directly acts in the penetration process of the host cuticle. The sequence is that of Endochitinase 11 (chi11) from Metarhizium anisopliae (Entomophthora anisopliae).